A 358-amino-acid polypeptide reads, in one-letter code: WAT1-related protein At3g28080 (358 aa).

10 helical membrane-spanning segments follow: residues 12–32 (AVFLTAMLAGETSIVGLSTLF), 42–62 (IYPFLSYSYLLASLLLLPSLF), 81–101 (IGLLGFLGSMYVITGGIGIEY), 105–125 (TLASAIGNIVPALTFILAVIF), 137–157 (SVAKVMGTILSLIGAFVVIFY), 187–207 (WLIGGAILTIQGIFVSVSFIL), 219–239 (FTVSILYILCISIVTSMIGLV), 245–265 (PSIWIIHFDITLFTIVTTGII), 283–303 (LYLAIFKPLSILIAVVMGTIF), and 308–328 (LYLGCLIGGILITLGFYVVMW). One can recognise an EamA domain in the interval 27 to 155 (GLSTLFKVAT…LSLIGAFVVI (129 aa)).

This sequence belongs to the drug/metabolite transporter (DMT) superfamily. Plant drug/metabolite exporter (P-DME) (TC 2.A.7.4) family.

It is found in the membrane. The protein is WAT1-related protein At3g28080 of Arabidopsis thaliana (Mouse-ear cress).